A 415-amino-acid polypeptide reads, in one-letter code: MSDHLLRDEHQENVQPRKLLVPVGGRTVLGVLQENHRGPKALKVSKPALQQTQVLSVNHLGVNDENYGKIPARKAASKQPAFTIHVDEPDCATNKRKAVHKKTVQDENLQQLNSVLGSIGTRKPLHPIQIAMETSFGSPMDVSIVDEEQKVVGCNNVADYAKEIHTYLREMEVKCKPKAGYMQKQPDITGNMRAILVDWLVEVGEEYKLQNETLYLAVNYIDRFLSSMSVLRGKLQLVGTAAMLLASKFEEIYPPEVAEFVYITDDTYTKKQVLKMEHLVLKVLSFDLAAPTILQYLNQYFQIHPVSPKVESLSMFLGELSLVDADPFLRYLPSVVAAAAFVIANCTINERTWSDPLVEYTSYTLETLKPCILDLYQTYLSAASHQQQAVREKYKAPKNHAVSLIIPPESMSTFL.

The protein belongs to the cyclin family. Cyclin AB subfamily. Interacts with the CDK1 and CDK2 protein kinases to form serine/threonine kinase holoenzyme complexes. Ubiquitous.

It is found in the nucleus. It localises to the cytoplasm. Cyclin which controls both the G1/S and the G2/M transition phases of the cell cycle. Functions through the formation of specific serine/threonine kinase holoenzyme complexes with the cyclin-dependent protein kinases CDK1 and CDK2. The cyclin subunit confers the substrate specificity of these complexes and differentially interacts with and activates CDK1 and CDK2 throughout the cell cycle. The protein is Cyclin-A2 (ccna2) of Xenopus laevis (African clawed frog).